The following is a 59-amino-acid chain: Potassium channel toxin alpha-KTx 16.2 (59 aa).

The N-terminal stretch at 1–22 is a signal peptide; the sequence is MKIFSILLVALIICSISICTEA. 3 disulfide bridges follow: Cys-30–Cys-51, Cys-36–Cys-56, and Cys-40–Cys-58.

Belongs to the short scorpion toxin superfamily. Potassium channel inhibitor family. Alpha-KTx 16 subfamily. In terms of tissue distribution, expressed by the venom gland.

It is found in the secreted. Its function is as follows. Alpha-KTx 16.2: inhibits large conductance calcium-activated potassium channels (KCa1.1/Slo-beta4 KCNMA1/KCNMB4). It appears to block channel activity by a simple bimolecular inhibition process. Shows a fast association rate and a slow dissociation rate of binding on rat brain synaptosome. Significantly inhibits voltage-dependent sodium current and voltage-dependent delayed rectifier potassium currents. In terms of biological role, significantly inhibits voltage-dependent sodium current (Nav) and voltage-dependent delayed rectifier potassium current. The sequence is that of Potassium channel toxin alpha-KTx 16.2 from Olivierus martensii (Manchurian scorpion).